The chain runs to 457 residues: Oxygen-independent coproporphyrinogen III oxidase (457 aa).

Positions 47 to 279 (LKNPMPLSLY…EILESLISFL (233 aa)) constitute a Radical SAM core domain. Residue tyrosine 56 participates in S-adenosyl-L-methionine binding. Cysteine 62 and cysteine 66 together coordinate [4Fe-4S] cluster. Phenylalanine 68 contributes to the S-adenosyl-L-methionine binding site. [4Fe-4S] cluster is bound at residue cysteine 69. Residues glycine 113, 114-115 (GT), glutamate 147, glutamine 174, arginine 186, aspartate 211, alanine 245, and isoleucine 331 each bind S-adenosyl-L-methionine.

This sequence belongs to the anaerobic coproporphyrinogen-III oxidase family. Monomer. Requires [4Fe-4S] cluster as cofactor.

It is found in the cytoplasm. It carries out the reaction coproporphyrinogen III + 2 S-adenosyl-L-methionine = protoporphyrinogen IX + 2 5'-deoxyadenosine + 2 L-methionine + 2 CO2. Its pathway is porphyrin-containing compound metabolism; protoporphyrin-IX biosynthesis; protoporphyrinogen-IX from coproporphyrinogen-III (AdoMet route): step 1/1. In terms of biological role, involved in the heme biosynthesis. Catalyzes the anaerobic oxidative decarboxylation of propionate groups of rings A and B of coproporphyrinogen III to yield the vinyl groups in protoporphyrinogen IX. The protein is Oxygen-independent coproporphyrinogen III oxidase (hemN) of Helicobacter pylori (strain ATCC 700392 / 26695) (Campylobacter pylori).